The sequence spans 96 residues: Large ribosomal subunit protein uL23 (96 aa).

The protein belongs to the universal ribosomal protein uL23 family. Part of the 50S ribosomal subunit. Contacts protein L29, and trigger factor when it is bound to the ribosome.

In terms of biological role, one of the early assembly proteins it binds 23S rRNA. One of the proteins that surrounds the polypeptide exit tunnel on the outside of the ribosome. Forms the main docking site for trigger factor binding to the ribosome. The chain is Large ribosomal subunit protein uL23 from Caldicellulosiruptor saccharolyticus (strain ATCC 43494 / DSM 8903 / Tp8T 6331).